Reading from the N-terminus, the 96-residue chain is Growth-regulated alpha protein (96 aa).

The first 24 residues, 1 to 24 (MIPATRSLLCAALLLLATSRLATG), serve as a signal peptide directing secretion. Cystine bridges form between cysteine 33–cysteine 59 and cysteine 35–cysteine 75.

Belongs to the intercrine alpha (chemokine CxC) family. In terms of processing, the N-terminal processed form KC(5-72) is produced by proteolytic cleavage after secretion from bone marrow stromal cells.

It is found in the secreted. In terms of biological role, has chemotactic activity for neutrophils. Contributes to neutrophil activation during inflammation. Hematoregulatory chemokine, which, in vitro, suppresses hematopoietic progenitor cell proliferation. KC(5-72) shows a highly enhanced hematopoietic activity. The polypeptide is Growth-regulated alpha protein (Cxcl1) (Mus musculus (Mouse)).